Reading from the N-terminus, the 446-residue chain is C4-dicarboxylate transport protein (446 aa).

9 helical membrane passes run 20-40 (HLYV…HFYP), 56-76 (LVKM…IAGM), 91-111 (IYFL…ANVV), 160-180 (GDIL…AGVG), 200-220 (LVHI…AFTI), 233-253 (FLIL…LGLV), 319-339 (IYMT…LSLG), 344-364 (LLLV…AGFI), and 367-387 (AATL…ILGI).

This sequence belongs to the dicarboxylate/amino acid:cation symporter (DAACS) (TC 2.A.23) family.

Its subcellular location is the cell inner membrane. Responsible for the transport of dicarboxylates such as succinate, fumarate, and malate from the periplasm across the membrane. The polypeptide is C4-dicarboxylate transport protein (Azorhizobium caulinodans (strain ATCC 43989 / DSM 5975 / JCM 20966 / LMG 6465 / NBRC 14845 / NCIMB 13405 / ORS 571)).